We begin with the raw amino-acid sequence, 439 residues long: 26S proteasome regulatory subunit 6A (439 aa).

M1 is subject to N-acetylmethionine. Position 9 is a phosphoserine (S9). 227–234 (GPPGTGKT) contributes to the ATP binding site. S376 is modified (phosphoserine).

This sequence belongs to the AAA ATPase family. Component of the 19S proteasome regulatory particle complex. The 26S proteasome consists of a 20S core particle (CP) and two 19S regulatory subunits (RP). The regulatory particle is made of a lid composed of 9 subunits, a base containing 6 ATPases including PSMC3 and few additional components. Interacts with PAAF1. In terms of assembly, (Microbial infection) Interacts with HIV-1 Tat. Sumoylated by UBE2I in response to MEKK1-mediated stimuli.

Its subcellular location is the cytoplasm. It localises to the nucleus. In terms of biological role, component of the 26S proteasome, a multiprotein complex involved in the ATP-dependent degradation of ubiquitinated proteins. This complex plays a key role in the maintenance of protein homeostasis by removing misfolded or damaged proteins, which could impair cellular functions, and by removing proteins whose functions are no longer required. Therefore, the proteasome participates in numerous cellular processes, including cell cycle progression, apoptosis, or DNA damage repair. PSMC3 belongs to the heterohexameric ring of AAA (ATPases associated with diverse cellular activities) proteins that unfolds ubiquitinated target proteins that are concurrently translocated into a proteolytic chamber and degraded into peptides. The polypeptide is 26S proteasome regulatory subunit 6A (PSMC3) (Homo sapiens (Human)).